The chain runs to 282 residues: MIDLLVILVSLLFGVVWYEKQLQTRIKIKEHFTILQPPPVIAAECPGSTTPWCVSNLDLANTSCQWFKKETTIKNLLGPANPKTLIPPVMVPRITDQSEWATDNYKLHSAINQTHSRALDYLADGQTTASCSSSPPLVYSSFNSNCCDGVKQGETHPLTVYDPRSVGGCTNPSRCFIDPVVGQPRYYYDDVNVTRAPNYITRNKLDTFSFGQTTGRLSNPNCLSDRPSINQLAVDHFHDNILQYRSSLMDSFRCKTQARSDQLRQFPISTNGQLAASGGSKV.

The first 18 residues, 1 to 18, serve as a signal peptide directing secretion; that stretch reads MIDLLVILVSLLFGVVWY.

The protein belongs to the IIV-6 213R family.

This is an uncharacterized protein from Aedes vexans (Inland floodwater mosquito).